Reading from the N-terminus, the 280-residue chain is Small ribosomal subunit protein uS3 (280 aa).

The KH type-2 domain occupies 38 to 106 (IRRLLSTGLE…QVQLNILEVR (69 aa)). A disordered region spans residues 215–280 (AAAAPAGAER…PAAEPQSTES (66 aa)). The segment covering 238-280 (SGASGTTATGTEAGRAAASADESTAAGQPAEAAPAAEPQSTES) has biased composition (low complexity).

It belongs to the universal ribosomal protein uS3 family. In terms of assembly, part of the 30S ribosomal subunit. Forms a tight complex with proteins S10 and S14.

In terms of biological role, binds the lower part of the 30S subunit head. Binds mRNA in the 70S ribosome, positioning it for translation. The polypeptide is Small ribosomal subunit protein uS3 (Mycobacterium avium (strain 104)).